Reading from the N-terminus, the 398-residue chain is 4-hydroxy-3-methylbut-2-enyl diphosphate reductase (398 aa).

Cysteine 66 serves as a coordination point for [4Fe-4S] cluster. Histidine 96 provides a ligand contact to (2E)-4-hydroxy-3-methylbut-2-enyl diphosphate. Dimethylallyl diphosphate is bound at residue histidine 96. Histidine 96 lines the isopentenyl diphosphate pocket. Cysteine 157 contacts [4Fe-4S] cluster. Histidine 185 is a (2E)-4-hydroxy-3-methylbut-2-enyl diphosphate binding site. Histidine 185 serves as a coordination point for dimethylallyl diphosphate. Histidine 185 contacts isopentenyl diphosphate. Glutamate 187 acts as the Proton donor in catalysis. Threonine 250 is a (2E)-4-hydroxy-3-methylbut-2-enyl diphosphate binding site. [4Fe-4S] cluster is bound at residue cysteine 288. Serine 317, serine 318, asparagine 319, and serine 379 together coordinate (2E)-4-hydroxy-3-methylbut-2-enyl diphosphate. Residues serine 317, serine 318, asparagine 319, and serine 379 each coordinate dimethylallyl diphosphate. Isopentenyl diphosphate-binding residues include serine 317, serine 318, asparagine 319, and serine 379.

Belongs to the IspH family. It depends on [4Fe-4S] cluster as a cofactor.

The catalysed reaction is isopentenyl diphosphate + 2 oxidized [2Fe-2S]-[ferredoxin] + H2O = (2E)-4-hydroxy-3-methylbut-2-enyl diphosphate + 2 reduced [2Fe-2S]-[ferredoxin] + 2 H(+). The enzyme catalyses dimethylallyl diphosphate + 2 oxidized [2Fe-2S]-[ferredoxin] + H2O = (2E)-4-hydroxy-3-methylbut-2-enyl diphosphate + 2 reduced [2Fe-2S]-[ferredoxin] + 2 H(+). It participates in isoprenoid biosynthesis; dimethylallyl diphosphate biosynthesis; dimethylallyl diphosphate from (2E)-4-hydroxy-3-methylbutenyl diphosphate: step 1/1. The protein operates within isoprenoid biosynthesis; isopentenyl diphosphate biosynthesis via DXP pathway; isopentenyl diphosphate from 1-deoxy-D-xylulose 5-phosphate: step 6/6. Functionally, catalyzes the conversion of 1-hydroxy-2-methyl-2-(E)-butenyl 4-diphosphate (HMBPP) into a mixture of isopentenyl diphosphate (IPP) and dimethylallyl diphosphate (DMAPP). Acts in the terminal step of the DOXP/MEP pathway for isoprenoid precursor biosynthesis. In Synechococcus sp. (strain ATCC 27144 / PCC 6301 / SAUG 1402/1) (Anacystis nidulans), this protein is 4-hydroxy-3-methylbut-2-enyl diphosphate reductase.